Consider the following 119-residue polypeptide: NADH-quinone oxidoreductase subunit A (119 aa).

The next 3 membrane-spanning stretches (helical) occupy residues 7–27 (FPVLLFIVVGVGLGLALMTIG), 63–83 (LIAILFILFDLETAFLFPWGV), and 88–108 (IGWPGFFAMGVFLLEFLVGFV).

It belongs to the complex I subunit 3 family. As to quaternary structure, NDH-1 is composed of 14 different subunits. Subunits NuoA, H, J, K, L, M, N constitute the membrane sector of the complex.

Its subcellular location is the cell inner membrane. The catalysed reaction is a quinone + NADH + 5 H(+)(in) = a quinol + NAD(+) + 4 H(+)(out). NDH-1 shuttles electrons from NADH, via FMN and iron-sulfur (Fe-S) centers, to quinones in the respiratory chain. The immediate electron acceptor for the enzyme in this species is believed to be ubiquinone. Couples the redox reaction to proton translocation (for every two electrons transferred, four hydrogen ions are translocated across the cytoplasmic membrane), and thus conserves the redox energy in a proton gradient. This Ralstonia pickettii (strain 12J) protein is NADH-quinone oxidoreductase subunit A.